The chain runs to 132 residues: Z-ring associated protein G (132 aa).

Residues 1–21 traverse the membrane as a helical segment; the sequence is MTWEYALIGLVVGIIIGAVAM. Residues 95–132 are disordered; sequence FRNRLAESEASNDQAPVQMPRDYSEGASGLLRTGAKRD.

This sequence belongs to the ZapG family.

The protein localises to the cell inner membrane. Its function is as follows. Involved in cell division, cell envelope biogenesis and cell shape maintenance. This is Z-ring associated protein G from Escherichia coli O157:H7.